A 513-amino-acid polypeptide reads, in one-letter code: ATP synthase subunit alpha (513 aa).

169-176 is an ATP binding site; sequence GDRQIGKT.

It belongs to the ATPase alpha/beta chains family. As to quaternary structure, F-type ATPases have 2 components, CF(1) - the catalytic core - and CF(0) - the membrane proton channel. CF(1) has five subunits: alpha(3), beta(3), gamma(1), delta(1), epsilon(1). CF(0) has three main subunits: a(1), b(2) and c(9-12). The alpha and beta chains form an alternating ring which encloses part of the gamma chain. CF(1) is attached to CF(0) by a central stalk formed by the gamma and epsilon chains, while a peripheral stalk is formed by the delta and b chains.

It localises to the cell inner membrane. It carries out the reaction ATP + H2O + 4 H(+)(in) = ADP + phosphate + 5 H(+)(out). In terms of biological role, produces ATP from ADP in the presence of a proton gradient across the membrane. The alpha chain is a regulatory subunit. The sequence is that of ATP synthase subunit alpha from Francisella philomiragia subsp. philomiragia (strain ATCC 25017 / CCUG 19701 / FSC 153 / O#319-036).